Reading from the N-terminus, the 341-residue chain is MFVDKTLLITGGTGSFGNAVLSRFLKNDIIKDIKEIRIFSRDEKKQEDMRIALNNPKIKFYIGDVRNYNSIDDAMKDVDYVFHAAALKQVPTCEFYPMEAINTNILGAENVLRAATINKVAKVIVLSTDKAVYPINAMGLSKALMEKLAIAKARMNVRDKTVFCVTRYGNVMASRGSVIPLFINQIKQNKDLTITEPSMTRFLMSLVDSVDLVLYAFEYGHQGDIFVQKSPASTIEVLAKALQGIFNSKNKIRFIGTRHGEKHYESLVSSEEMAKAEDLGNYYRIPMDGRDLNYAKYFVEGEKKIALLEDYTSHNTKRLNLEEVKELLLNLDYVQEELKNA.

Belongs to the polysaccharide synthase family.

It carries out the reaction UDP-alpha-D-glucose = UDP-alpha-D-galactose. Its function is as follows. Epimerizes UDP-galactose to UDP-glucose. The sequence is that of UDP-glucose 4-epimerase (capD) from Rickettsia bellii (strain OSU 85-389).